Consider the following 242-residue polypeptide: Protein Thf1 (242 aa).

A coiled-coil region spans residues 178 to 209 (SSDKLQKDLDLYRSNLDKMQQLLTVIEDTLEA). The disordered stretch occupies residues 212–242 (KKRASQKLEKKPEVVEEKEHKENEEQQQSSN). A compositionally biased stretch (basic and acidic residues) spans 217 to 235 (QKLEKKPEVVEEKEHKENE).

The protein belongs to the THF1 family.

In terms of biological role, may be involved in photosynthetic membrane biogenesis. The protein is Protein Thf1 of Crocosphaera subtropica (strain ATCC 51142 / BH68) (Cyanothece sp. (strain ATCC 51142)).